Reading from the N-terminus, the 2178-residue chain is DNA-directed RNA polymerase subunit beta (2178 aa).

3 insert regions span residues 269-325 (SKKI…TPFV), 714-1508 (KRID…LFYN), and 1703-1900 (KGND…LQPM).

Belongs to the RNA polymerase beta chain family. In terms of assembly, in plastids the minimal PEP RNA polymerase catalytic core is composed of four subunits: alpha, beta, beta', and beta''. When a (nuclear-encoded) sigma factor is associated with the core the holoenzyme is formed, which can initiate transcription.

It is found in the plastid. It localises to the chloroplast. It carries out the reaction RNA(n) + a ribonucleoside 5'-triphosphate = RNA(n+1) + diphosphate. Functionally, DNA-dependent RNA polymerase catalyzes the transcription of DNA into RNA using the four ribonucleoside triphosphates as substrates. This chain is DNA-directed RNA polymerase subunit beta, found in Tupiella akineta (Green alga).